Here is a 345-residue protein sequence, read N- to C-terminus: Protein TRIGALACTOSYLDIACYLGLYCEROL 3, chloroplastic (345 aa).

Residues Met-1–Cys-46 constitute a chloroplast transit peptide. One can recognise an ABC transporter domain in the interval Ile-85–Thr-336. Gly-117–Ser-124 is an ATP binding site.

It belongs to the ABC transporter superfamily. ABCI family. As to quaternary structure, catalytic subunit of the TGD complex, a lipid translocator at the inner chloroplast envelope membrane made of TGD1, TGD2 and TGD3. Interacts with TGD1 and TGD2 with an overall subunit stoichiometry of 2 TGD1, 2 TGD3 and 8 to 12 TGD2. Interacts with TGD5.

It localises to the plastid. The protein resides in the chloroplast stroma. Functionally, ATPase transporter involved in lipid transfer from the endoplasmic reticulum (ER) to plastids, and necessary for thylakoids formation. Not involved in transition metal transport pathways. This is Protein TRIGALACTOSYLDIACYLGLYCEROL 3, chloroplastic from Arabidopsis thaliana (Mouse-ear cress).